The chain runs to 614 residues: Numb-like protein (614 aa).

Disordered regions lie at residues 1–68 (MSRS…QWQA), 223–283 (GSFR…PVAA), 371–420 (FASA…LEEV), 448–468 (QQQQATSVPPMPTMAPTLQPF), and 539–614 (LGKA…EIEL). A PID domain is found at 74-223 (RKGTCSFPVR…ASRTSFAREG (150 aa)). Phosphoserine is present on residues serine 224 and serine 228. The segment covering 233–245 (PAEREAGDKKKAE) has biased composition (basic and acidic residues). The segment covering 246-260 (AAAAPAVAPGPAQPG) has biased composition (low complexity). Residue serine 263 is modified to Phosphoserine. Residue threonine 279 is modified to Phosphothreonine. Over residues 371 to 390 (FASAGAPVPGPPSATTGTSA) the composition is skewed to low complexity. Over residues 409-418 (TPSEAERWLE) the composition is skewed to basic and acidic residues. Serine 411 bears the Phosphoserine mark. Pro residues predominate over residues 563-578 (NGAPWPPEPAPAPAPE).

As to quaternary structure, associates with EPS15 and NOTCH1. Interacts (via PTB domain) with MAP3K7IP2 (via C-terminal). Interacts (via C-terminal) with TRAF6 (via TRAF domains).

Its subcellular location is the cytoplasm. Plays a role in the process of neurogenesis. Required throughout embryonic neurogenesis to maintain neural progenitor cells, also called radial glial cells (RGCs), by allowing their daughter cells to choose progenitor over neuronal cell fate. Not required for the proliferation of neural progenitor cells before the onset of embryonic neurogenesis. Also required postnatally in the subventricular zone (SVZ) neurogenesis by regulating SVZ neuroblasts survival and ependymal wall integrity. Negative regulator of NF-kappa-B signaling pathway. The inhibition of NF-kappa-B activation is mediated at least in part, by preventing MAP3K7IP2 to interact with polyubiquitin chains of TRAF6 and RIPK1 and by stimulating the 'Lys-48'-linked polyubiquitination and degradation of TRAF6 in cortical neurons. In Rattus norvegicus (Rat), this protein is Numb-like protein (Numbl).